The chain runs to 202 residues: Holliday junction resolvase RecU (202 aa).

Mg(2+) is bound by residues Thr-85, Asp-87, Glu-100, and Gln-119.

This sequence belongs to the RecU family. The cofactor is Mg(2+).

It is found in the cytoplasm. It catalyses the reaction Endonucleolytic cleavage at a junction such as a reciprocal single-stranded crossover between two homologous DNA duplexes (Holliday junction).. In terms of biological role, endonuclease that resolves Holliday junction intermediates in genetic recombination. Cleaves mobile four-strand junctions by introducing symmetrical nicks in paired strands. Promotes annealing of linear ssDNA with homologous dsDNA. Required for DNA repair, homologous recombination and chromosome segregation. The sequence is that of Holliday junction resolvase RecU from Streptococcus uberis (strain ATCC BAA-854 / 0140J).